The sequence spans 423 residues: Glucose-1-phosphate adenylyltransferase (423 aa).

Residues tyrosine 107, glycine 172, 187 to 188 (EK), and serine 205 each bind alpha-D-glucose 1-phosphate.

Belongs to the bacterial/plant glucose-1-phosphate adenylyltransferase family. In terms of assembly, homotetramer.

The enzyme catalyses alpha-D-glucose 1-phosphate + ATP + H(+) = ADP-alpha-D-glucose + diphosphate. It participates in glycan biosynthesis; glycogen biosynthesis. Involved in the biosynthesis of ADP-glucose, a building block required for the elongation reactions to produce glycogen. Catalyzes the reaction between ATP and alpha-D-glucose 1-phosphate (G1P) to produce pyrophosphate and ADP-Glc. This Cereibacter sphaeroides (strain ATCC 17025 / ATH 2.4.3) (Rhodobacter sphaeroides) protein is Glucose-1-phosphate adenylyltransferase.